Here is a 97-residue protein sequence, read N- to C-terminus: ATP-dependent Clp protease adapter protein ClpS (97 aa).

The protein belongs to the ClpS family. In terms of assembly, binds to the N-terminal domain of the chaperone ClpA.

Functionally, involved in the modulation of the specificity of the ClpAP-mediated ATP-dependent protein degradation. In Nautilia profundicola (strain ATCC BAA-1463 / DSM 18972 / AmH), this protein is ATP-dependent Clp protease adapter protein ClpS.